The primary structure comprises 329 residues: Short-chain dehydrogenase/reductase tropG (329 aa).

Lys-57, Asp-86, Asn-113, Tyr-203, and Lys-207 together coordinate NADP(+). The active-site Proton acceptor is the Tyr-203. Residue Lys-207 is the Lowers pKa of active site Tyr of the active site.

Belongs to the short-chain dehydrogenases/reductases (SDR) family.

The protein operates within secondary metabolite biosynthesis. Short-chain dehydrogenase/reductase; part of the gene cluster that mediates the biosynthesis of the tropolone class of fungal maleic anhydrides. The pathway begins with the synthesis of 3-methylorcinaldehyde by the non-reducing polyketide synthase (PKS) tropA. 3-methylorcinaldehyde is the substrate for the FAD-dependent monooxygenase tropB to yield a dearomatized hydroxycyclohexadione. The 2-oxoglutarate-dependent dioxygenase tropC then performs the oxidative ring expansion to provide the first tropolone metabolite stipitaldehyde. Trop D converts stipitaldehyde into stipitacetal which is in turn converted to stipitalide by the short-chain dehydrogenase/reductase tropE. The next steps involve tropF, tropG, tropH, tropI and tropJ to form successive tropolone maleic anhydrides including stipitaldehydic, stipitatonic and stipitatic acids. The protein is Short-chain dehydrogenase/reductase tropG of Talaromyces stipitatus (strain ATCC 10500 / CBS 375.48 / QM 6759 / NRRL 1006) (Penicillium stipitatum).